The chain runs to 806 residues: Portal protein (806 aa).

The interval 337–380 is interaction with Cargo protein 1; it reads SKRKILKVKSYDPETGEEEWNFYPENYVVNKEAGEEVQSFWVNE. Positions 783–792 are enriched in basic and acidic residues; sequence KKKAETDASI. The disordered stretch occupies residues 783 to 806; the sequence is KKKAETDASIKRQALRKKSSTTNK. A compositionally biased stretch (basic residues) spans 795–806; sequence QALRKKSSTTNK.

In terms of assembly, homododecamer. Interacts with the Cargo protein 1. Interacts with the major capsid protein.

Its subcellular location is the virion. Functionally, forms the portal vertex of the capsid. Probably involved in head assembly, genome packaging, tail attachment, and genome ejection. The chain is Portal protein from Bacteroides phage crAss001 (Bacteroides phage PhiCrAss001).